A 188-amino-acid polypeptide reads, in one-letter code: Threonylcarbamoyl-AMP synthase (188 aa).

The YrdC-like domain maps to Gln-3 to Gln-188.

This sequence belongs to the SUA5 family. TsaC subfamily.

The protein resides in the cytoplasm. The catalysed reaction is L-threonine + hydrogencarbonate + ATP = L-threonylcarbamoyladenylate + diphosphate + H2O. Its function is as follows. Required for the formation of a threonylcarbamoyl group on adenosine at position 37 (t(6)A37) in tRNAs that read codons beginning with adenine. Catalyzes the conversion of L-threonine, HCO(3)(-)/CO(2) and ATP to give threonylcarbamoyl-AMP (TC-AMP) as the acyladenylate intermediate, with the release of diphosphate. In Shewanella sp. (strain MR-4), this protein is Threonylcarbamoyl-AMP synthase.